Here is a 108-residue protein sequence, read N- to C-terminus: Zinc finger protein 475 (108 aa).

C2HC/C3H-type zinc fingers lie at residues 6–35 (PAVV…KWHN) and 79–108 (QLVP…KAAK). The Zn(2+) site is built by Cys10, Cys13, His25, Cys29, Cys83, Cys86, His98, and Cys102.

It depends on Zn(2+) as a cofactor.

In Homo sapiens (Human), this protein is Zinc finger protein 475.